A 242-amino-acid polypeptide reads, in one-letter code: uncharacterized protein (242 aa).

An N-terminal signal peptide occupies residues Met-1–Ala-17. N-linked (GlcNAc...) asparagine glycosylation is found at Asn-47, Asn-86, Asn-122, Asn-159, and Asn-178. A disordered region spans residues Asn-176–Ala-214. The span at Ser-180–Ala-214 shows a compositional bias: low complexity. The GPI-like-anchor amidated alanine moiety is linked to residue Ala-218. A propeptide spans Gly-219 to Leu-242 (removed in mature form).

Post-translationally, the GPI-like anchor contains a phosphoceramide lipid group. The anchor position has not been determined.

It is found in the cell membrane. This is an uncharacterized protein from Aspergillus fumigatus (strain ATCC MYA-4609 / CBS 101355 / FGSC A1100 / Af293) (Neosartorya fumigata).